The following is a 100-amino-acid chain: Urease subunit gamma (100 aa).

Belongs to the urease gamma subunit family. Heterotrimer of UreA (gamma), UreB (beta) and UreC (alpha) subunits. Three heterotrimers associate to form the active enzyme.

It localises to the cytoplasm. The enzyme catalyses urea + 2 H2O + H(+) = hydrogencarbonate + 2 NH4(+). The protein operates within nitrogen metabolism; urea degradation; CO(2) and NH(3) from urea (urease route): step 1/1. The sequence is that of Urease subunit gamma from Actinobacillus pleuropneumoniae serotype 5b (strain L20).